Reading from the N-terminus, the 704-residue chain is Elongation factor G (704 aa).

A tr-type G domain is found at 8 to 290; that stretch reads ARYRNIGISA…AVIDYLPAPT (283 aa). GTP contacts are provided by residues 17 to 24, 88 to 92, and 142 to 145; these read AHIDAGKT, DTPGH, and NKMD.

It belongs to the TRAFAC class translation factor GTPase superfamily. Classic translation factor GTPase family. EF-G/EF-2 subfamily.

The protein localises to the cytoplasm. Catalyzes the GTP-dependent ribosomal translocation step during translation elongation. During this step, the ribosome changes from the pre-translocational (PRE) to the post-translocational (POST) state as the newly formed A-site-bound peptidyl-tRNA and P-site-bound deacylated tRNA move to the P and E sites, respectively. Catalyzes the coordinated movement of the two tRNA molecules, the mRNA and conformational changes in the ribosome. In Pectobacterium atrosepticum (strain SCRI 1043 / ATCC BAA-672) (Erwinia carotovora subsp. atroseptica), this protein is Elongation factor G.